The primary structure comprises 1209 residues: MSARTKEKTKDKTKNDEQTVSTEASAADRNDREKSSSSEPEDNAKETLTKKDSSSKKSVDVLAAMIEQKVQMSGSAGLGEFFGRMRPEITDAFFAALEREADVSKVVPSSLSKLDDGQVVDLLSVGEERTLSQSLFQLEVVTSIPHFYQLTAKQIGALGAQGGYLKAYHGEQVYPFIDPVANQFGRGFDLAYVRINTSGQGVELFIDPFDFDKVSCKVGGESLTGIGLSNAVGVDEITYDDVKTPEQMMEFVVLLIAGAAKMGRFCSSGVDARRRRKLFKTWVRRPVSDNFRHVQGWLLEDDYENYPHVPEALTVFSEYQWFAREVADNMTDNGLGTSVQMEDGPNIESFFNRKYREAAICNLDFITAEAHANVMEELQNEKMNVSAYVDLLQSCQMGIFDIEGDTDTIKLKVYMREVEDYEAELTRMMLFPGDQLYVDCLRTAALVSPNIRQFILSVLIQQATSRVGLIELLPVAEMTASLTSRDNISVSHNMALTLAIGEWKELLRLTNPQQICQKIVCDIMAPFVDGLRMEDSLGVPTPSKLVFSLLGAKVALILTPNLYDYNLHLKAHLVTMILSCFFPDQYGALIASRGYGHDVTGNRIDSIRDGERTKKNCRFATYTVLDPIPNGPPDRTRRKWLLMKRVQEWLLRNDLVRRREIRDIIYRPYANVLRLPGQTYLPRRQAAGAPLPCEVLLNDAIAILEEYRTVFHHPNDRNQGPQDRHALTTLSNLLRWYTRGFAEWFHWVYRPLYLQIALHPIIFWSHRLGQGVWRQFPAVREDRERRFDNHLEGVPFDSPVIAAFEPDVALNPFTLRQGADLLGRVHAQGSTFRGGAYDSASVILLSEYEALYRMTDSEGMVDEYIKTLMASRQLLEGLRLVAELSTGELLRDTPILDYIRTAFCEGRFPSHIFFKILNLFGVKINHGVLAQVGERSIEHRLRGDYRVYYPRPGFLDPALEFIPDRIVVVDPVRPSVRRNVKLIMDAVFDPEFGMIKMRKGVTFSLRPTNDLTFSSFHEIPPIQVEMTGNVNYVYDSETARTRAEYDVQVRWEAPGRIITMNLLVTSSYEILSSMEDILGREVRAFSFVVQDVSKFSGIYYDFMLSAVRKEHAIVWFPNLRGILHHHAISIEKVETCFKAAELAQFSSFLSLRPTALIKLNVVQTTNIRGGILPPSVSKPILPCEGVHPSFIFALMSMWRRIGFAGLPSR.

2 stretches are compositionally biased toward basic and acidic residues: residues 1–17 (MSAR…KNDE) and 26–53 (AADR…KKDS). The disordered stretch occupies residues 1-53 (MSARTKEKTKDKTKNDEQTVSTEASAADRNDREKSSSSEPEDNAKETLTKKDS).

Belongs to the turreted BTV-fold inner capsid family. Homodecamer; each decamer is made up of two conformers of VP2, called VP2A and VP2B. 12 homodecamers assemble to form an icosahedral capsid.

Its subcellular location is the virion. Functionally, inner capsid protein that self-assembles to form an icosahedral capsid with a T=2 symmetry, which consists of 120 copies of VP2, with channels at each of its five-fold vertices. This capsid constitutes the innermost concentric layer of the viral mature particle. This Callospermophilus lateralis (Golden-mantled ground squirrel) protein is Inner capsid protein VP2.